The following is a 267-amino-acid chain: Phosphatidylglycerol--prolipoprotein diacylglyceryl transferase (267 aa).

3 consecutive transmembrane segments (helical) span residues 18–38 (LSVRWYGLMYLIGFAFAMWFA), 57–77 (FLFYGMLGVILGGRIGYVLFY), and 95–115 (GGMSFHGGTLGVITAVVIFAW). Arg140 is an a 1,2-diacyl-sn-glycero-3-phospho-(1'-sn-glycerol) binding site. 3 consecutive transmembrane segments (helical) span residues 173-193 (SQLYEAFFEGLVLFLILQWFI), 200-220 (GSVAGVFLLGYGTFRFCIEYF), and 233-253 (FISMGQILSLPMIVGGLGLLI).

The protein belongs to the Lgt family.

It is found in the cell inner membrane. It catalyses the reaction L-cysteinyl-[prolipoprotein] + a 1,2-diacyl-sn-glycero-3-phospho-(1'-sn-glycerol) = an S-1,2-diacyl-sn-glyceryl-L-cysteinyl-[prolipoprotein] + sn-glycerol 1-phosphate + H(+). It functions in the pathway protein modification; lipoprotein biosynthesis (diacylglyceryl transfer). Catalyzes the transfer of the diacylglyceryl group from phosphatidylglycerol to the sulfhydryl group of the N-terminal cysteine of a prolipoprotein, the first step in the formation of mature lipoproteins. The polypeptide is Phosphatidylglycerol--prolipoprotein diacylglyceryl transferase (Pseudoalteromonas translucida (strain TAC 125)).